Reading from the N-terminus, the 633-residue chain is tRNA uridine 5-carboxymethylaminomethyl modification enzyme MnmG (633 aa).

FAD-binding positions include 15 to 20 (GAGHAG), Val127, and Ser182. 276–290 (GPRYCPSIEDKIVRF) provides a ligand contact to NAD(+). Gln373 serves as a coordination point for FAD.

Belongs to the MnmG family. As to quaternary structure, homodimer. Heterotetramer of two MnmE and two MnmG subunits. The cofactor is FAD.

It localises to the cytoplasm. Its function is as follows. NAD-binding protein involved in the addition of a carboxymethylaminomethyl (cmnm) group at the wobble position (U34) of certain tRNAs, forming tRNA-cmnm(5)s(2)U34. In Streptococcus thermophilus (strain CNRZ 1066), this protein is tRNA uridine 5-carboxymethylaminomethyl modification enzyme MnmG.